Here is a 237-residue protein sequence, read N- to C-terminus: Protein GrpE (237 aa).

2 disordered regions span residues 1–52 (MSGD…RLQQ) and 200–237 (KVSM…EPGV). Polar residues predominate over residues 27 to 40 (ASMNSDEGQPSAQS). Over residues 204–218 (GPGPQSGASPSSAQS) the composition is skewed to low complexity.

Belongs to the GrpE family. Homodimer.

The protein localises to the cytoplasm. In terms of biological role, participates actively in the response to hyperosmotic and heat shock by preventing the aggregation of stress-denatured proteins, in association with DnaK and GrpE. It is the nucleotide exchange factor for DnaK and may function as a thermosensor. Unfolded proteins bind initially to DnaJ; upon interaction with the DnaJ-bound protein, DnaK hydrolyzes its bound ATP, resulting in the formation of a stable complex. GrpE releases ADP from DnaK; ATP binding to DnaK triggers the release of the substrate protein, thus completing the reaction cycle. Several rounds of ATP-dependent interactions between DnaJ, DnaK and GrpE are required for fully efficient folding. In Prochlorococcus marinus (strain MIT 9303), this protein is Protein GrpE.